Here is a 257-residue protein sequence, read N- to C-terminus: Glucose-1-phosphate cytidylyltransferase (257 aa).

Residues 6–10, 11–13, Lys23, Ser104, Arg109, and Gly128 each bind substrate; these read LAGGL and GTR. Asp129 and Asp234 together coordinate Mg(2+).

It belongs to the glucose-1-phosphate cytidylyltransferase family. In terms of assembly, homohexamer. Requires Mg(2+) as cofactor.

The catalysed reaction is alpha-D-glucose 1-phosphate + CTP + H(+) = CDP-D-glucose + diphosphate. Its pathway is nucleotide-sugar biosynthesis; CDP-3,6-dideoxy-D-mannose biosynthesis; CDP-3,6-dideoxy-D-mannose from CTP and alpha-D-glucose 1-phosphate: step 1/5. The protein operates within bacterial outer membrane biogenesis; LPS O-antigen biosynthesis. Its function is as follows. Involved in the biosynthesis of the tyvelose, a 3,6-dideoxyhexose found in the O-antigen of the surface lipopolysaccharides. It catalyzes the transfer of a CMP moiety from CTP to glucose 1-phosphate. This chain is Glucose-1-phosphate cytidylyltransferase (rfbF), found in Salmonella typhimurium (strain LT2 / SGSC1412 / ATCC 700720).